A 650-amino-acid polypeptide reads, in one-letter code: Acetyl-coenzyme A synthetase (650 aa).

CoA is bound by residues 191–194, Thr-311, and Asn-335; that span reads RAGR. Residues 387 to 389, 411 to 416, Asp-500, and Arg-515 contribute to the ATP site; these read GEP and DTWWQT. Ser-523 serves as a coordination point for CoA. ATP is bound at residue Arg-526. The Mg(2+) site is built by Val-537, His-539, and Val-542. Residue Arg-584 participates in CoA binding. Lys-609 bears the N6-acetyllysine mark.

Belongs to the ATP-dependent AMP-binding enzyme family. It depends on Mg(2+) as a cofactor. Post-translationally, acetylated. Deacetylation by the SIR2-homolog deacetylase activates the enzyme.

It catalyses the reaction acetate + ATP + CoA = acetyl-CoA + AMP + diphosphate. Catalyzes the conversion of acetate into acetyl-CoA (AcCoA), an essential intermediate at the junction of anabolic and catabolic pathways. AcsA undergoes a two-step reaction. In the first half reaction, AcsA combines acetate with ATP to form acetyl-adenylate (AcAMP) intermediate. In the second half reaction, it can then transfer the acetyl group from AcAMP to the sulfhydryl group of CoA, forming the product AcCoA. The protein is Acetyl-coenzyme A synthetase of Shewanella pealeana (strain ATCC 700345 / ANG-SQ1).